Consider the following 247-residue polypeptide: uncharacterized protein (247 aa).

Positions 19, 38, 63, and 64 each coordinate NAD(+). S142 lines the substrate pocket. NAD(+)-binding residues include Y155, K159, and S190. The active-site Proton acceptor is Y155.

The protein belongs to the short-chain dehydrogenases/reductases (SDR) family.

This is an uncharacterized protein from Mycobacterium bovis (strain ATCC BAA-935 / AF2122/97).